A 421-amino-acid polypeptide reads, in one-letter code: ATP-dependent RNA helicase RhlB (421 aa).

The short motif at 9 to 37 is the Q motif element; it reads QKFSDFALHPQVVEALEKKGFYNCTPIQA. The 180-residue stretch at 40–219 folds into the Helicase ATP-binding domain; it reads LPLTLAGRDV…FEQMNNAEYV (180 aa). ATP is bound at residue 53–60; it reads AQTGTGKT. A DEAD box motif is present at residues 165–168; it reads DEAD. The region spanning 245–390 is the Helicase C-terminal domain; it reads RLLQTLIEEE…VSKYNPEALM (146 aa). The segment at 396 to 421 is disordered; the sequence is PLRLTRSRPGNGPRRAGAPRNRRRSG. Residues 402-414 show a composition bias toward low complexity; the sequence is SRPGNGPRRAGAP.

The protein belongs to the DEAD box helicase family. RhlB subfamily. Component of the RNA degradosome, which is a multiprotein complex involved in RNA processing and mRNA degradation.

The protein resides in the cytoplasm. It carries out the reaction ATP + H2O = ADP + phosphate + H(+). Its function is as follows. DEAD-box RNA helicase involved in RNA degradation. Has RNA-dependent ATPase activity and unwinds double-stranded RNA. In Salmonella arizonae (strain ATCC BAA-731 / CDC346-86 / RSK2980), this protein is ATP-dependent RNA helicase RhlB.